The sequence spans 1343 residues: DNA-directed RNA polymerase subunit beta (1343 aa).

Belongs to the RNA polymerase beta chain family. In terms of assembly, the RNAP catalytic core consists of 2 alpha, 1 beta, 1 beta' and 1 omega subunit. When a sigma factor is associated with the core the holoenzyme is formed, which can initiate transcription.

It carries out the reaction RNA(n) + a ribonucleoside 5'-triphosphate = RNA(n+1) + diphosphate. Functionally, DNA-dependent RNA polymerase catalyzes the transcription of DNA into RNA using the four ribonucleoside triphosphates as substrates. This chain is DNA-directed RNA polymerase subunit beta, found in Haemophilus influenzae (strain 86-028NP).